The following is a 147-amino-acid chain: UPF0306 protein YhbP (147 aa).

This sequence belongs to the UPF0306 family.

This is UPF0306 protein YhbP from Escherichia coli O157:H7 (strain EC4115 / EHEC).